We begin with the raw amino-acid sequence, 164 residues long: CB1 cannabinoid receptor-interacting protein 1 (164 aa).

Belongs to the CNRIP family. As to quaternary structure, interacts with the cannabinoid receptor CNR1 (via C-terminus). Does not interact with cannabinoid receptor CNR2. In terms of tissue distribution, highly expressed in brain. Also detected in heart, lung, intestine, kidney, testis, spleen, liver and muscle (at protein level).

Its function is as follows. Suppresses cannabinoid receptor CNR1-mediated tonic inhibition of voltage-gated calcium channels. This Mus musculus (Mouse) protein is CB1 cannabinoid receptor-interacting protein 1 (Cnrip1).